A 259-amino-acid chain; its full sequence is MTKDISKNESVVFDVQGLNLWYGEDQALKNIKMQIKKNKVTAIIGPSGCGKSTFIKTLNRMIENIPSVKTTGEIIYQGQNIFAKSVRVEELRTKVGMVFQKPNPFPKSIFANVVYGPRIHGIKDKKLLMDIAETSLRNAALWDEVKDRLHDNAYGLSGGQQQRLCIARCLAVQPDVILMDEPTSALDPIATYKIEELMESLKKHYTIAIVTHSMQQAARISDDTAFFLMGDLIEFDKTTEIFSNPKDKRTEDYITGRIG.

The ABC transporter domain maps to 6–254 (SKNESVVFDV…PKDKRTEDYI (249 aa)). An ATP-binding site is contributed by 45–52 (GPSGCGKS).

This sequence belongs to the ABC transporter superfamily. Phosphate importer (TC 3.A.1.7) family. In terms of assembly, the complex is composed of two ATP-binding proteins (PstB), two transmembrane proteins (PstC and PstA) and a solute-binding protein (PstS).

The protein resides in the cell membrane. It carries out the reaction phosphate(out) + ATP + H2O = ADP + 2 phosphate(in) + H(+). In terms of biological role, part of the ABC transporter complex PstSACB involved in phosphate import. Responsible for energy coupling to the transport system. The protein is Phosphate import ATP-binding protein PstB of Desulfitobacterium hafniense (strain Y51).